A 192-amino-acid polypeptide reads, in one-letter code: Xanthine phosphoribosyltransferase (192 aa).

Xanthine-binding residues include Leu-20 and Asn-27. 128–132 (ADGEA) lines the 5-phospho-alpha-D-ribose 1-diphosphate pocket. Lys-156 lines the xanthine pocket.

This sequence belongs to the purine/pyrimidine phosphoribosyltransferase family. Xpt subfamily. As to quaternary structure, homodimer.

Its subcellular location is the cytoplasm. The catalysed reaction is XMP + diphosphate = xanthine + 5-phospho-alpha-D-ribose 1-diphosphate. It participates in purine metabolism; XMP biosynthesis via salvage pathway; XMP from xanthine: step 1/1. Functionally, converts the preformed base xanthine, a product of nucleic acid breakdown, to xanthosine 5'-monophosphate (XMP), so it can be reused for RNA or DNA synthesis. This chain is Xanthine phosphoribosyltransferase, found in Agathobacter rectalis (strain ATCC 33656 / DSM 3377 / JCM 17463 / KCTC 5835 / VPI 0990) (Eubacterium rectale).